A 439-amino-acid chain; its full sequence is Methylenetetrahydrofolate--tRNA-(uracil-5-)-methyltransferase TrmFO (439 aa).

8–13 (GGGLAG) contributes to the FAD binding site.

The protein belongs to the MnmG family. TrmFO subfamily. The cofactor is FAD.

The protein resides in the cytoplasm. The enzyme catalyses uridine(54) in tRNA + (6R)-5,10-methylene-5,6,7,8-tetrahydrofolate + NADH + H(+) = 5-methyluridine(54) in tRNA + (6S)-5,6,7,8-tetrahydrofolate + NAD(+). The catalysed reaction is uridine(54) in tRNA + (6R)-5,10-methylene-5,6,7,8-tetrahydrofolate + NADPH + H(+) = 5-methyluridine(54) in tRNA + (6S)-5,6,7,8-tetrahydrofolate + NADP(+). Its function is as follows. Catalyzes the folate-dependent formation of 5-methyl-uridine at position 54 (M-5-U54) in all tRNAs. This chain is Methylenetetrahydrofolate--tRNA-(uracil-5-)-methyltransferase TrmFO, found in Dictyoglomus turgidum (strain DSM 6724 / Z-1310).